The sequence spans 2618 residues: Mediator of RNA polymerase II transcription subunit 13 (2618 aa).

3 stretches are compositionally biased toward low complexity: residues 232–255 (FAAA…VPNP), 509–519 (TPASGTGSLSA), and 532–543 (DSKQLVQQQIQQ). Disordered stretches follow at residues 232 to 279 (FAAA…AAPP), 509 to 543 (TPAS…QIQQ), 569 to 731 (GNTP…SGGP), 916 to 957 (LNIK…AEGL), 970 to 995 (TSSN…NGGC), 1036 to 1055 (TKMF…SSPC), 1268 to 1384 (PRTP…TGVV), 1521 to 1557 (ASAS…ITGY), 1614 to 1633 (SRKN…LDKI), and 1985 to 2060 (KTLL…GETK). A phosphothreonine mark is found at Thr571 and Thr575. 3 stretches are compositionally biased toward polar residues: residues 581–590 (STYSRNSLGG), 634–643 (APTSVSNLQQ), and 669–681 (SITA…QTPS). The segment covering 692-706 (AGGGPAGGQGLGTGP) has biased composition (gly residues). Positions 711 to 723 (AQQPATPTAATSA) are enriched in low complexity. A compositionally biased stretch (gly residues) spans 939–949 (NSSGGGSGSGG). Over residues 1272-1295 (LTPSTVPQPLSSGGSQYLLNQLNC) the composition is skewed to polar residues. Gly residues-rich tracts occupy residues 1375–1384 (GLGGGATGVV) and 1528–1538 (AGSGHGHGPNG). Residues 1539–1553 (GSNSSSCTPPSSNPH) are compositionally biased toward low complexity. Polar residues predominate over residues 1614 to 1629 (SRKNQNKQGPGETSSA). A compositionally biased stretch (low complexity) spans 1993–2014 (GSGNSHSKGGSSCSSNSSSVSG). 2 positions are modified to phosphoserine: Ser2472 and Ser2475.

It belongs to the Mediator complex subunit 13 family. In terms of assembly, component of the Cdk8 module of the Mediator complex, composed of CycC, Cdk8, kto and skd.

The protein resides in the nucleus. Component of the Mediator complex, a coactivator involved in the regulated transcription of nearly all RNA polymerase II-dependent genes. Mediator functions as a bridge to convey information from gene-specific regulatory proteins to the basal RNA polymerase II transcription machinery. Mediator is recruited to promoters by direct interactions with regulatory proteins and serves as a scaffold for the assembly of a functional preinitiation complex with RNA polymerase II and the general transcription factors. Required for leg and eye development and macrochaete specification or differentiation. Negatively regulates sex comb development. Required for activated transcription of the MtnB and MtnD genes. The protein is Mediator of RNA polymerase II transcription subunit 13 (skd) of Drosophila melanogaster (Fruit fly).